Here is a 1302-residue protein sequence, read N- to C-terminus: Ubiquitin conjugation factor E4 B (1302 aa).

Met-1 carries the post-translational modification N-acetylmethionine. Positions 1–155 (MEELSADEIR…EPSSGPEVSE (155 aa)) are disordered. The span at 16–33 (RLAGGQTSQPTTPLTSPQ) shows a compositional bias: low complexity. Phosphoserine occurs at positions 23 and 31. Residues 51–64 (QSLGLNVHNMTPAT) show a composition bias toward polar residues. A compositionally biased stretch (low complexity) spans 76 to 99 (SQSSEGVSSLSSSPSNSLETQSQS). Residues Ser-84, Ser-88, Ser-90, Ser-101, Ser-103, Ser-105, and Ser-124 each carry the phosphoserine modification. Positions 134-147 (NDRREKRSLSDKEP) are enriched in basic and acidic residues. Ser-238 carries the post-translational modification Phosphoserine. Positions 299–327 (AASQLAVPSTPLSPHSAASGTAAGSQPSS) are enriched in polar residues. A disordered region spans residues 299–406 (AASQLAVPST…SPSLGASGGA (108 aa)). Over residues 340–374 (ASSGVSILSSSPSPPALASSPQAVPASSSRQRPSS) the composition is skewed to low complexity. Ser-383 carries the phosphoserine modification. The segment covering 384–400 (PSATSRRPSSLRISPSL) has biased composition (low complexity). Phosphoserine occurs at positions 803 and 969. The tract at residues 1057–1077 (NKEQWDQLPRDQQQARQSQLA) is disordered. Residues 1066-1077 (RDQQQARQSQLA) show a composition bias toward low complexity. The U-box domain maps to 1227-1300 (DAPDEFRDPL…QAWMREKQNS (74 aa)). Residue Ser-1265 is modified to Phosphoserine.

The protein belongs to the ubiquitin conjugation factor E4 family. Interacts with VCP/p97. Interacts with STUB1/CHIP and UNC45B. Post-translationally, proteolytically cleaved by caspases during apoptosis. Cleaved efficiently at Asp-123 by caspase-6 and granzyme B. Cleaved with approximately 10-fold less efficiency at Asp-109 by caspase-3 and caspase-7. Expressed in differentiated myotubes (at protein level). Highest expression in ovary, testis, heart and skeletal muscle. Expression is low in colon, thymus and peripheral blood leukocytes. Almost undetectable in lung and spleen.

It is found in the cytoplasm. It localises to the nucleus. The catalysed reaction is S-ubiquitinyl-[E2 ubiquitin-conjugating enzyme]-L-cysteine + [acceptor protein]-L-lysine = [E2 ubiquitin-conjugating enzyme]-L-cysteine + N(6)-ubiquitinyl-[acceptor protein]-L-lysine.. The protein operates within protein modification; protein ubiquitination. Ubiquitin-protein ligase that probably functions as an E3 ligase in conjunction with specific E1 and E2 ligases. May also function as an E4 ligase mediating the assembly of polyubiquitin chains on substrates ubiquitinated by another E3 ubiquitin ligase. May regulate myosin assembly in striated muscles together with STUB1 and VCP/p97 by targeting myosin chaperone UNC45B for proteasomal degradation. The protein is Ubiquitin conjugation factor E4 B of Homo sapiens (Human).